A 243-amino-acid polypeptide reads, in one-letter code: Probable transcriptional regulatory protein LJ_0904 (243 aa).

Residues 1-22 (MSGHSKWHNIQGRKNAQDAKRG) are disordered.

This sequence belongs to the TACO1 family.

The protein resides in the cytoplasm. The polypeptide is Probable transcriptional regulatory protein LJ_0904 (Lactobacillus johnsonii (strain CNCM I-12250 / La1 / NCC 533)).